The following is a 380-amino-acid chain: Protein Wnt-5a (380 aa).

The N-terminal stretch at 1-40 (MRKNLWTFQFGGEASGLVGSAMVSQHFVVLLMSLYCLTQS) is a signal peptide. A disulfide bond links Cys-104 and Cys-115. Residues Asn-114 and Asn-120 are each glycosylated (N-linked (GlcNAc...) asparagine). 10 disulfides stabilise this stretch: Cys-154–Cys-162, Cys-164–Cys-182, Cys-238–Cys-252, Cys-240–Cys-247, Cys-309–Cys-340, Cys-325–Cys-335, Cys-339–Cys-379, Cys-355–Cys-370, Cys-357–Cys-367, and Cys-362–Cys-363. A lipid anchor (O-palmitoleoyl serine; by PORCN) is attached at Ser-244. Residues Asn-312 and Asn-326 are each glycosylated (N-linked (GlcNAc...) asparagine).

Belongs to the Wnt family. In terms of processing, palmitoleoylation is required for efficient binding to frizzled receptors. Depalmitoleoylation leads to Wnt signaling pathway inhibition. In terms of tissue distribution, found primarily in ectoderm with lower levels of expression in mesoderm. Detected in the head and tail with lower expression in the middle of the embryo. No expression was found in the notochord.

Its subcellular location is the secreted. The protein localises to the extracellular space. It localises to the extracellular matrix. Functionally, ligand for members of the frizzled family of seven transmembrane receptors. Can activate or inhibit canonical Wnt signaling, depending on receptor context. Plays a role in normal embryonic development. In Xenopus laevis (African clawed frog), this protein is Protein Wnt-5a (wnt5a).